Reading from the N-terminus, the 312-residue chain is DNA-directed RNA polymerase subunit alpha (312 aa).

The segment at 1–226 (MIEFEKPNIT…EHFKVFMSTD (226 aa)) is alpha N-terminal domain (alpha-NTD). Residues 243 to 312 (NEKKLEMTIE…ELGLSLRQDD (70 aa)) are alpha C-terminal domain (alpha-CTD).

This sequence belongs to the RNA polymerase alpha chain family. In terms of assembly, homodimer. The RNAP catalytic core consists of 2 alpha, 1 beta, 1 beta' and 1 omega subunit. When a sigma factor is associated with the core the holoenzyme is formed, which can initiate transcription.

The catalysed reaction is RNA(n) + a ribonucleoside 5'-triphosphate = RNA(n+1) + diphosphate. DNA-dependent RNA polymerase catalyzes the transcription of DNA into RNA using the four ribonucleoside triphosphates as substrates. This chain is DNA-directed RNA polymerase subunit alpha, found in Lactobacillus gasseri (strain ATCC 33323 / DSM 20243 / BCRC 14619 / CIP 102991 / JCM 1131 / KCTC 3163 / NCIMB 11718 / NCTC 13722 / AM63).